Consider the following 267-residue polypeptide: Elsinochrome reductase 1 (267 aa).

I26, D72, N99, and R132 together coordinate NADP(+). S149 serves as the catalytic Proton donor. The NADP(+) site is built by Y163, K167, I196, and T198. Y163 acts as the Proton acceptor in catalysis. K167 (lowers pKa of active site Tyr) is an active-site residue.

This sequence belongs to the short-chain dehydrogenases/reductases (SDR) family.

Its function is as follows. Reductase; part of the gene cluster that mediates the biosynthesis of elsinochromes, pigments consisting of at least four interconvertible tautomers (A, B, C and D) that have a core phenolic quinone to which various side chains are attached and which play an important role in fungal pathogenesis. The non-reducing polyketide synthase PKS1 was proposed to iteratively catalyze decarboxylation between acetyl-CoA and malonyl-CoA subunits for polyketide chain elongation. The released polyketide undergoes cyclization to form an aromatic ring, and proceeds via serial modification steps to produce the heptaketide back- bone of elsinochrome. As elsinochrome has a symmetrical structure, two identical heptaketides are fused to form a core 1,2-dihydrobenzo-perylene ring structure, which can then be successively modified to produce the various derivatives of elsinochrome. Some of these reactions may be cooperatively carried out, at least in part, by the products of RDT1, OXR1 and PKS1. PRF1, embedded within the elsinochrome cluster possibly functions to stabilize some of the biosynthetic enzymes required for elsinochrome production. As prefoldin is a hexamer containing 2 a and 4 b subunits, additional prefoldin subunits, whose coding genes may not immediately link to the elsinochrome biosynthetic gene cluster, are required to fulfill the chaperone function. In addition, no methyltransferase-coding gene exists within the biosynthetic gene cluster, even though elsinochrome has four methyl groups at positions C3, C7, C8 and C12. Apparently, the identified gene cluster does not contain the entire entourage of genes responsible for elsinochrome biosynthesis. Once elsinochrome is synthesized, it must be exported outside the fungal cells, which is probably accomplished by the ECT1 transporter, to avoid toxicity. The sequence is that of Elsinochrome reductase 1 from Elsinoe fawcettii (Citrus scab fungus).